Here is a 165-residue protein sequence, read N- to C-terminus: Destrin (165 aa).

Ala-2 is subject to N-acetylalanine. Phosphoserine is present on Ser-3. The region spanning 4–153 (GVQVADEVCR…NRTSIAEKLG (150 aa)) is the ADF-H domain. Residue Lys-19 is modified to N6-acetyllysine. A Nuclear localization signal motif is present at residues 30 to 34 (KKRKK).

This sequence belongs to the actin-binding proteins ADF family. In terms of processing, ISGylated.

In terms of biological role, actin-depolymerizing protein. Severs actin filaments (F-actin) and binds to actin monomers (G-actin). Acts in a pH-independent manner. The chain is Destrin (Dstn) from Rattus norvegicus (Rat).